Here is a 97-residue protein sequence, read N- to C-terminus: Mitochondrial import inner membrane translocase subunit Tim8 A (97 aa).

A Twin CX3C motif motif is present at residues 43 to 66; that stretch reads CWEKCMDKPGPKLDSRAEACFVNC. 2 disulfides stabilise this stretch: cysteine 43/cysteine 66 and cysteine 47/cysteine 62. Serine 57, serine 87, serine 94, and serine 96 each carry phosphoserine.

Belongs to the small Tim family. As to quaternary structure, heterohexamer; composed of 3 copies of TIMM8A and 3 copies of TIMM13, named soluble 70 kDa complex. Associates with the TIM22 complex, whose core is composed of TIMM22.

It is found in the mitochondrion inner membrane. Functionally, mitochondrial intermembrane chaperone that participates in the import and insertion of some multi-pass transmembrane proteins into the mitochondrial inner membrane. Also required for the transfer of beta-barrel precursors from the TOM complex to the sorting and assembly machinery (SAM complex) of the outer membrane. Acts as a chaperone-like protein that protects the hydrophobic precursors from aggregation and guide them through the mitochondrial intermembrane space. The TIMM8-TIMM13 complex mediates the import of proteins such as TIMM23, SLC25A12/ARALAR1 and SLC25A13/ARALAR2, while the predominant TIMM9-TIMM10 70 kDa complex mediates the import of much more proteins. In Bos taurus (Bovine), this protein is Mitochondrial import inner membrane translocase subunit Tim8 A (TIMM8A).